An 824-amino-acid chain; its full sequence is AMP deaminase 2 (824 aa).

The interval 1 to 43 (MASYPGPGKSKAKYPFKKRASLQASAAAPEARSGLGASPLQSA) is disordered. A compositionally biased stretch (basic residues) spans 10 to 20 (SKAKYPFKKRA). Ser-21 is subject to Phosphoserine. Low complexity predominate over residues 21–33 (SLQASAAAPEARS). Arg-44 carries the omega-N-methylarginine modification. Phosphoserine is present on residues Ser-45, Ser-63, and Ser-79. Tyr-90 carries the post-translational modification Phosphotyrosine. Ser-96 and Ser-113 each carry phosphoserine. The residue at position 133 (Thr-133) is a Phosphothreonine. Phosphoserine is present on residues Ser-135 and Ser-137. Zn(2+) contacts are provided by His-364 and His-366. Residues His-366 and 435–440 (KFNAKY) contribute to the substrate site. Residue His-633 participates in Zn(2+) binding. Glu-636 provides a ligand contact to substrate. The active-site Proton acceptor is His-655. Position 710 (Asp-710) interacts with Zn(2+). 711–714 (DPLQ) lines the substrate pocket.

The protein belongs to the metallo-dependent hydrolases superfamily. Adenosine and AMP deaminases family. In terms of assembly, homotetramer. It depends on Zn(2+) as a cofactor.

The catalysed reaction is AMP + H2O + H(+) = IMP + NH4(+). It functions in the pathway purine metabolism; IMP biosynthesis via salvage pathway; IMP from AMP: step 1/1. In terms of biological role, AMP deaminase plays a critical role in energy metabolism. Catalyzes the deamination of AMP to IMP and plays an important role in the purine nucleotide cycle. This chain is AMP deaminase 2, found in Rattus norvegicus (Rat).